The following is a 116-amino-acid chain: Large ribosomal subunit protein bL19 (116 aa).

Belongs to the bacterial ribosomal protein bL19 family.

Functionally, this protein is located at the 30S-50S ribosomal subunit interface and may play a role in the structure and function of the aminoacyl-tRNA binding site. The protein is Large ribosomal subunit protein bL19 of Staphylococcus epidermidis (strain ATCC 35984 / DSM 28319 / BCRC 17069 / CCUG 31568 / BM 3577 / RP62A).